We begin with the raw amino-acid sequence, 284 residues long: ATP phosphoribosyltransferase (284 aa).

It belongs to the ATP phosphoribosyltransferase family. Long subfamily. As to quaternary structure, equilibrium between an active dimeric form, an inactive hexameric form and higher aggregates. Interconversion between the various forms is largely reversible and is influenced by the natural substrates and inhibitors of the enzyme. It depends on Mg(2+) as a cofactor.

The protein resides in the cytoplasm. It catalyses the reaction 1-(5-phospho-beta-D-ribosyl)-ATP + diphosphate = 5-phospho-alpha-D-ribose 1-diphosphate + ATP. It functions in the pathway amino-acid biosynthesis; L-histidine biosynthesis; L-histidine from 5-phospho-alpha-D-ribose 1-diphosphate: step 1/9. With respect to regulation, feedback inhibited by histidine. Its function is as follows. Catalyzes the condensation of ATP and 5-phosphoribose 1-diphosphate to form N'-(5'-phosphoribosyl)-ATP (PR-ATP). Has a crucial role in the pathway because the rate of histidine biosynthesis seems to be controlled primarily by regulation of HisG enzymatic activity. This is ATP phosphoribosyltransferase (hisG) from Mycobacterium bovis (strain ATCC BAA-935 / AF2122/97).